A 3033-amino-acid polypeptide reads, in one-letter code: Genome polyprotein (3033 aa).

Ser2 is modified (N-acetylserine; by host). The interaction with STAT1 stretch occupies residues 2–23; sequence STNPKPQRKTKRNTNRRPQDVK. Residues 2–58 are interaction with EIF2AK2/PKR; that stretch reads STNPKPQRKTKRNTNRRPQDVKFPGGGQIVGGVYLLPRRGPRLGVRATRKTSERSQP. The interval 2 to 59 is interaction with DDX3X; the sequence is STNPKPQRKTKRNTNRRPQDVKFPGGGQIVGGVYLLPRRGPRLGVRATRKTSERSQPR. Residues 2-75 form a disordered region; the sequence is STNPKPQRKT…PKDRRSAGKS (74 aa). Residues 2 to 168 lie on the Cytoplasmic side of the membrane; the sequence is STNPKPQRKT…EDGINYATGN (167 aa). 2 consecutive short sequence motifs (nuclear localization signal) follow at residues 5-13 and 38-43; these read PKPQRKTKR and PRRGPR. A compositionally biased stretch (basic residues) spans 7–16; the sequence is PQRKTKRNTN. The segment covering 32–47 has biased composition (low complexity); it reads GGVYLLPRRGPRLGVR. Residue Ser53 is modified to Phosphoserine; by host. Short sequence motifs (nuclear localization signal) lie at residues 58-64 and 66-71; these read PRGRRQP and PKDRRS. Phosphoserine; by host occurs at positions 99 and 116. The important for endoplasmic reticulum and mitochondrial localization stretch occupies residues 112 to 152; it reads PRHRSRNLGKVIDTLTCGFADLMGYIPVVGAPVGGVARALA. The interaction with APOA2 stretch occupies residues 122–173; sequence VIDTLTCGFADLMGYIPVVGAPVGGVARALAHGVRVLEDGINYATGNLPGCS. Residues 164-167 form an important for lipid droplets localization region; the sequence is YATG. A helical membrane pass occupies residues 169 to 189; sequence LPGCSFSIFLLALLSCMSVPV. Residues 178 to 191 constitute a propeptide, ER anchor for the core protein, removed in mature form by host signal peptidase; it reads LLALLSCMSVPVSA. The Lumenal portion of the chain corresponds to 190–358; that stretch reads SAVEVKNTSQ…TGAHWGVMFG (169 aa). 3 N-linked (GlcNAc...) asparagine; by host glycosylation sites follow: Asn196, Asn209, and Asn234. The important for fusion stretch occupies residues 265–296; that stretch reads IVVSATFCSALYIGDVCGAIMIAAQATIISPQ. A glycan (N-linked (GlcNAc...) asparagine; by host) is linked at Asn305. A helical transmembrane segment spans residues 359–379; sequence LAYFSMQGAWAKVVVILLLTA. The Lumenal portion of the chain corresponds to 380–729; sequence GVDAQTHTIS…WEWVVLLFLL (350 aa). The tract at residues 385 to 412 is HVR1; the sequence is THTISGHAARTTHGLVSLFTPGSQQNIQ. Residues Asn417, Asn423, and Asn430 are each glycosylated (N-linked (GlcNAc...) (high mannose) asparagine; by host). Intrachain disulfides connect Cys429–Cys554, Cys452–Cys459, Cys488–Cys496, and Cys505–Cys510. Residue Asn448 is glycosylated (N-linked (GlcNAc...) asparagine; by host). The tract at residues 475 to 480 is HVR2; that stretch reads EENVTN. Asn477 carries an N-linked (GlcNAc...) asparagine; by host glycan. The CD81-binding 1 stretch occupies residues 482-495; that stretch reads DNMRPYCWHYPPRP. An N-linked (GlcNAc...) asparagine; by host glycan is attached at Asn534. Residues 546–553 form a CD81-binding 2 region; that stretch reads PPRGAWFG. N-linked (GlcNAc...) asparagine; by host glycosylation occurs at Asn558. 4 cysteine pairs are disulfide-bonded: Cys566-Cys571, Cys585-Cys589, Cys601-Cys624, and Cys611-Cys648. Residues Asn627 and Asn649 are each glycosylated (N-linked (GlcNAc...) (high mannose) asparagine; by host). Cysteines 656 and 681 form a disulfide. The PKR/eIF2-alpha phosphorylation homology domain (PePHD) stretch occupies residues 664–675; sequence SQLSPLLHSTTE. Residues 730–750 traverse the membrane as a helical segment; the sequence is LADARVCACLWMLLLLGQAEA. The Lumenal segment spans residues 751 to 761; sequence ALEKLVILHAA. A helical membrane pass occupies residues 762-782; it reads SAASSHGMLCFIIFFIAAWYI. The Cytoplasmic portion of the chain corresponds to 783–786; that stretch reads KGRV. Residues 787-807 form a helical membrane-spanning segment; the sequence is TPLVTYSYLGMWSFSLLLLAL. Topologically, residues 808–817 are lumenal; the sequence is PQQAYALDTT. A helical transmembrane segment spans residues 818–838; it reads EQGQIGLVLLVVISVFTLSPA. Residues 839–885 lie on the Cytoplasmic side of the membrane; the sequence is YKILLCRSLWWLSYLLVRAEALIQDWVPPWQARGGRDGIIWAATIFC. The chain crosses the membrane as a helical span at residues 886–906; sequence PGVLFDITNWLLAILGPGYLL. Positions 903 to 1030 constitute a Peptidase C18 domain; it reads GYLLRSVLTS…EYTSKGWKLL (128 aa). The Lumenal segment spans residues 907-932; the sequence is RSVLTSTPYFVRAQALLRICAAVRHL. A protease NS2-3 region spans residues 908–1210; the sequence is SVLTSTPYFV…PIESLDVIIR (303 aa). Cys926 carries S-palmitoyl cysteine; by host lipidation. Residues 933-953 traverse the membrane as a helical segment; sequence SGGKYVQMMLLTLGKWTGTYI. Residues 933 to 953 are interaction with host SCPS1; the sequence is SGGKYVQMMLLTLGKWTGTYI. At 954 to 1661 the chain is on the cytoplasmic side; it reads YDHLSPMSGW…CMQADLEIMT (708 aa). Catalysis depends on for protease NS2 activity; shared with dimeric partner residues His956, Glu976, and Cys997. Residues 1031–1212 enclose the Peptidase S29 domain; the sequence is APITAYAQQT…ESLDVIIRSP (182 aa). Catalysis depends on charge relay system; for serine protease NS3 activity residues His1087 and Asp1111. Zn(2+) contacts are provided by Cys1127 and Cys1129. Residue Ser1169 is the Charge relay system; for serine protease NS3 activity of the active site. Positions 1175 and 1179 each coordinate Zn(2+). One can recognise a Helicase ATP-binding domain in the interval 1221–1373; it reads PAVPQTYQVG…PNIEEVALGH (153 aa). Residue 1234–1241 participates in ATP binding; sequence APTGSGKS. Mg(2+) is bound by residues Ser1241 and Glu1321. Residues 1320-1323 carry the DECH box motif; the sequence is DECH. Positions 1490 to 1502 are RNA-binding; that stretch reads QRRGRTGRGRLGI. A helical membrane pass occupies residues 1662-1682; sequence STWVLAGGVLAAIAAYCLATG. The interval 1683-1694 is NS3-binding; sequence CVVCIGRVNINQ. Residues 1683–1809 lie on the Cytoplasmic side of the membrane; the sequence is CVVCIGRVNI…ALTSPLPTST (127 aa). A helical transmembrane segment spans residues 1810–1830; that stretch reads TILLNIMGGWLASQIAPAAGA. Topologically, residues 1831-1832 are lumenal; that stretch reads TG. The helical transmembrane segment at 1833–1853 threads the bilayer; sequence FVVSGLVGAAVGSIGLGKILV. A topological domain (cytoplasmic) is located at residue Asp1854. A helical transmembrane segment spans residues 1855-1875; that stretch reads VLAGYGAGISGALVAFKIMSG. The Lumenal portion of the chain corresponds to 1876–1885; sequence EKPSVEDVVN. The helical transmembrane segment at 1886-1906 threads the bilayer; sequence LLPGILSPGALVVGVICAAIL. Over 1907–1976 the chain is Cytoplasmic; the sequence is RRHVGQGEGA…WITEDCPVPC (70 aa). Residue Cys1976 is the site of S-palmitoyl cysteine; by host attachment. Residues 1977–2007 lie within the membrane without spanning it; that stretch reads AGSWLRDIWDWACTILTDFKNWLSTKLLPKM. Topologically, residues 2008–3012 are cytoplasmic; it reads PGLPFISCQR…YHSVSRARPR (1005 aa). Positions 2015, 2033, 2035, and 2056 each coordinate Zn(2+). The FKBP8-binding stretch occupies residues 2124-2212; the sequence is EFFSWVDGVQ…ASSSASQLSA (89 aa). The segment at 2124 to 2332 is transcriptional activation; sequence EFFSWVDGVQ…PTPPPRRRRA (209 aa). The tract at residues 2139–2143 is interaction with non-structural protein 4A; sequence PTPKP. A disordered region spans residues 2193 to 2212; the sequence is RLARGSPPSEASSSASQLSA. Residues 2193–2460 are interaction with host SKP2; sequence RLARGSPPSE…ALITPCGPEE (268 aa). A phosphoserine; by host mark is found at Ser2198, Ser2201, Ser2205, Ser2208, Ser2211, and Ser2214. Residues 2198–2212 are compositionally biased toward low complexity; sequence SPPSEASSSASQLSA. An ISDR region spans residues 2214–2249; it reads SLRATCTAHAKNYAVEMVDANFFMGSDVTRIESETK. The interval 2214–2275 is interaction with EIF2AK2/PKR; the sequence is SLRATCTAHA…REPSVPSEYL (62 aa). An NS4B-binding region spans residues 2249-2306; the sequence is KVLILDSLDPSVEEEDEREPSVPSEYLLPKKKFPQALPVWARPDYNPPVVETWKRPDY. Positions 2299–2376 are V3; that stretch reads ETWKRPDYDP…MDTTDATDQP (78 aa). Residues 2308–2328 form a disordered region; that stretch reads PPTVSGCALPPRVTAPTPPPR. The short motif at 2322-2325 is the SH3-binding element; the sequence is APTP. Residues 2327 to 2335 carry the Nuclear localization signal motif; that stretch reads PRRRRALVL. Lys2350 is covalently cross-linked (Glycyl lysine isopeptide (Lys-Gly) (interchain with G-Cter in ubiquitin)). The segment at 2353–2431 is disordered; sequence GQLPPSCDSG…PDLDSGSWST (79 aa). Residues 2361 to 2373 are compositionally biased toward polar residues; sequence SGRSTGMDTTDAT. 2 positions are modified to phosphoserine; by host: Ser2471 and Ser2484. The RdRp catalytic domain maps to 2656 to 2774; that stretch reads PMGFSYDTRC…ISESQGAEED (119 aa). Residues Asp2662, Asp2760, and Asp2761 each contribute to the Mg(2+) site. A helical membrane pass occupies residues 3013-3033; sequence FLLLCLLLLSVGVGIFLLPAR.

The protein belongs to the hepacivirus polyprotein family. In terms of assembly, homooligomer. Interacts with E1 (via C-terminus). Interacts with the non-structural protein 5A. Interacts (via N-terminus) with host STAT1 (via SH2 domain); this interaction results in decreased STAT1 phosphorylation and ubiquitin-mediated proteasome-dependent STAT1 degradation, leading to decreased IFN-stimulated gene transcription. Interacts with host STAT3; this interaction constitutively activates STAT3. Interacts with host LTBR receptor. Interacts with host TNFRSF1A receptor and possibly induces apoptosis. Interacts with host HNRPK. Interacts with host YWHAE. Interacts with host UBE3A/E6AP. Interacts with host DDX3X. Interacts with host APOA2. Interacts with host RXRA protein. Interacts with host SP110 isoform 3/Sp110b; this interaction sequesters the transcriptional corepressor SP110 away from the nucleus. Interacts with host CREB3 nuclear transcription protein; this interaction triggers cell transformation. Interacts with host ACY3. Interacts with host C1QR1. Interacts with host RBM24; this interaction, which enhances the interaction of the mature core protein with 5'-UTR, may inhibit viral translation and favor replication. Interacts with host EIF2AK2/PKR; this interaction induces the autophosphorylation of EIF2AK2. Part of the viral assembly initiation complex composed of NS2, E1, E2, NS3, NS4A, NS5A and the mature core protein. Forms a heterodimer with envelope glycoprotein E2. Interacts with mature core protein. Interacts with protease NS2. The heterodimer E1/E2 interacts with host CLDN1; this interaction plays a role in viral entry into host cell. Interacts with host SPSB2 (via C-terminus). Part of the viral assembly initiation complex composed of NS2, E1, E2, NS3, NS4A, NS5A and the mature core protein. Interacts with host NEURL3; this interaction prevents E1 binding to glycoprotein E2. As to quaternary structure, forms a heterodimer with envelope glycoprotein E1. Interacts with host CD81 and SCARB1 receptors; these interactions play a role in viral entry into host cell. Interacts with host EIF2AK2/PKR; this interaction inhibits EIF2AK2 and probably allows the virus to evade the innate immune response. Interacts with host CD209/DC-SIGN and CLEC4M/DC-SIGNR. Interact with host SPCS1; this interaction is essential for viral particle assembly. Interacts with protease NS2. The heterodimer E1/E2 interacts with host CLDN1; this interaction plays a role in viral entry into host cell. Part of the viral assembly initiation complex composed of NS2, E1, E2, NS3, NS4A, NS5A and the mature core protein. Interacts with host SLC3A2/4F2hc; the interaction may facilitate viral entry into host cell. Interacts with human PLSCR1. In terms of assembly, homohexamer. Homoheptamer. Interacts with protease NS2. Homodimer. Interacts with host SPCS1; this interaction is essential for viral particle assembly. Interacts with envelope glycoprotein E1. Interacts with envelope glycoprotein E2. Interacts with viroporin p7. Interacts with serine protease/helicase NS3. Part of the replication complex composed of NS2, NS3, NS4A, NS4B, NS5A and the RNA-directed RNA polymerase embedded in an ER-derived membranous web. Part of the viral assembly initiation complex composed of NS2, E1, E2, NS3, NS4A, NS5A and the mature core protein. As to quaternary structure, interacts with protease NS2. Interacts with non-structural protein 4A; this interaction stabilizes the folding of NS3 serine protease. NS3-NS4A interaction is essential for NS3 activation and allows membrane anchorage of the latter. NS3/NS4A complex also prevents phosphorylation of host IRF3, thus preventing the establishment of dsRNA induced antiviral state. Interacts with host MAVS; this interaction leads to the cleavage and inhibition of host MAVS. Interacts with host TICAM1; this interaction leads to the cleavage and inhibition of host TICAM1. Interacts with host TANK-binding kinase/TBK1; this interaction results in the inhibition of the association between TBK1 and IRF3, which leads to the inhibition of IRF3 activation. Interacts with host RBM24. Part of the replication complex composed of NS2, NS3, NS4A, NS4B, NS5A and the RNA-directed RNA polymerase embedded in an ER-derived membranous web. Part of the viral assembly initiation complex composed of NS2, E1, E2, NS3, NS4A, NS5A and the mature core protein. In terms of assembly, interacts with NS3 serine protease; this interaction stabilizes the folding of NS3 serine protease. NS3-NS4A interaction is essential for NS3 activation and allows membrane anchorage of the latter. Interacts with non-structural protein 5A (via N-terminus). Part of the replication complex composed of NS2, NS3, NS4A, NS4B, NS5A and the RNA-directed RNA polymerase embedded in an ER-derived membranous web. Part of the viral assembly initiation complex composed of NS2, E1, E2, NS3, NS4A, NS5A and the mature core protein. Homomultimer. Interacts with non-structural protein NS5A. Interacts with host PLA2G4C; this interaction likely initiates the recruitment of replication complexes to lipid droplets. Interacts with host STING; this interaction disrupts the interaction between STING and TBK1 thereby suppressing the interferon signaling. Part of the replication complex composed of NS2, NS3, NS4A, NS4B, NS5A and the RNA-directed RNA polymerase embedded in an ER-derived membranous web. As to quaternary structure, monomer. Homodimer; dimerization is required for RNA-binding. Interacts with the mature core protein. Interacts (via N-terminus) with non-structural protein 4A. Interacts with non-structural protein 4B. Interacts (via region D2) with RNA-directed RNA polymerase. Part of the viral assembly initiation complex composed of NS2, E1, E2, NS3, NS4A, NS5A and the mature core protein. Part of the replication complex composed of NS2, NS3, NS4A, NS4B, NS5A and the RNA-directed RNA polymerase embedded in an ER-derived membranous web. Interacts with host GRB2. Interacts with host BIN1. Interacts with host PIK3R1. Interacts with host SRCAP. Interacts with host FKBP8. Interacts (via C-terminus) with host VAPB (via MSP domain). Interacts with host EIF2AK2/PKR; this interaction leads to disruption of EIF2AK2 dimerization by NS5A and probably allows the virus to evade the innate immune response. Interacts (via N-terminus) with host PACSIN2 (via N-terminus); this interaction attenuates protein kinase C alpha-mediated phosphorylation of PACSIN2 by disrupting the interaction between PACSIN2 and PRKCA. Interacts (via N-terminus) with host SRC kinase (via SH2 domain). Interacts with most Src-family kinases. Interacts with host IFI27 and SKP2; promotes the ubiquitin-mediated proteasomal degradation of NS5A. Interacts with host GPS2. Interacts with host TNFRSF21; this interaction allows the modulation by the virus of JNK, p38 MAPK, STAT3, and Akt signaling pathways in a DR6-dependent manner. Interacts (via N-terminus) with host CIDEB (via N-terminus); this interaction seems to regulate the association of HCV particles with APOE. Interacts with host CHKA/Choline Kinase-alpha; CHKA bridges host PI4KA and NS5A and potentiates NS5A-stimulated PI4KA activity, which then facilitates the targeting of the ternary complex to the ER for viral replication. Interacts with host SPSB2 (via C-terminus); this interaction targets NS5A for ubiquitination and degradation. Interacts with host RAB18; this interaction may promote the association of NS5A and other replicase components with lipid droplets. Interacts (via region D2) with host PPIA/CYPA; the interaction stimulates RNA-binding ability of NS5A and is dependent on the peptidyl-prolyl cis-trans isomerase activity of PPIA/CYPA. Interacts with host TRIM14; this interaction induces the degradation of NS5A. In terms of assembly, homooligomer. Interacts with non-structural protein 5A. Interacts with host VAPB. Interacts with host PRK2/PKN2. Interacts with host HNRNPA1 and SEPT6; these interactions facilitate viral replication. Part of the replication complex composed of NS2, NS3, NS4A, NS4B, NS5A and the RNA-directed RNA polymerase. It depends on Zn(2+) as a cofactor. Mg(2+) is required as a cofactor. In terms of processing, specific enzymatic cleavages in vivo yield mature proteins. The structural proteins, core, E1, E2 and p7 are produced by proteolytic processing by host signal peptidases. The core protein precursor is synthesized as a 23 kDa, which is retained in the ER membrane through the hydrophobic signal peptide. Cleavage by the signal peptidase releases the 21 kDa mature core protein. The cleavage of the core protein precursor occurs between aminoacids 176 and 188 but the exact cleavage site is not known. Some degraded forms of the core protein appear as well during the course of infection. The other proteins (p7, NS2, NS3, NS4A, NS4B, NS5A and NS5B) are cleaved by the viral proteases. Autoprocessing between NS2 and NS3 is mediated by the NS2 cysteine protease catalytic domain and regulated by the NS3 N-terminal domain. Post-translationally, phosphorylated by host PKC and PKA. Ubiquitinated; mediated by UBE3A and leading to core protein subsequent proteasomal degradation. In terms of processing, highly N-glycosylated. Post-translationally, palmitoylation is required for NS2/3 autoprocessing and E2 recruitment to membranes. Palmitoylated. This modification may play a role in its polymerization or in protein-protein interactions. In terms of processing, phosphorylated on serines in a basal form termed p56. p58 is a hyperphosphorylated form of p56. p56 and p58 coexist in the cell in roughly equivalent amounts. Hyperphosphorylation is dependent on the presence of NS4A. Host CSNK1A1/CKI-alpha or RPS6KB1 kinases may be responsible for NS5A phosphorylation. Post-translationally, tyrosine phosphorylation is essential for the interaction with host SRC. Ubiquitinated. Ubiquitination, most probably at Lys-2350, mediated by host IFI27 and SKP2 leads to proteasomal degradation, restricting viral infection. Ubiquitination by host TRIM22 leads to interruption of viral replication. In terms of processing, the N-terminus is phosphorylated by host PRK2/PKN2.

The protein resides in the host endoplasmic reticulum membrane. It is found in the host mitochondrion membrane. The protein localises to the virion. It localises to the host cytoplasm. Its subcellular location is the host nucleus. The protein resides in the host lipid droplet. It is found in the virion membrane. The protein localises to the host mitochondrion. It localises to the host cell membrane. Its subcellular location is the host perinuclear region. The enzyme catalyses Hydrolysis of four peptide bonds in the viral precursor polyprotein, commonly with Asp or Glu in the P6 position, Cys or Thr in P1 and Ser or Ala in P1'.. The catalysed reaction is a ribonucleoside 5'-triphosphate + H2O = a ribonucleoside 5'-diphosphate + phosphate + H(+). It carries out the reaction ATP + H2O = ADP + phosphate + H(+). It catalyses the reaction RNA(n) + a ribonucleoside 5'-triphosphate = RNA(n+1) + diphosphate. Its activity is regulated as follows. Inhibited by the antiviral drug hexamethylene amiloride. Inhibition by amantadine appears to be genotype-dependent. Also inhibited by long-alkyl-chain iminosugar derivatives. With respect to regulation, activity is up-regulated by PRK2/PKN2-mediated phosphorylation. Packages viral RNA to form a viral nucleocapsid, and promotes virion budding. Participates in the viral particle production as a result of its interaction with the non-structural protein 5A. Binds RNA and may function as a RNA chaperone to induce the RNA structural rearrangements taking place during virus replication. Modulates viral translation initiation by interacting with viral IRES and 40S ribosomal subunit. Affects various cell signaling pathways, host immunity and lipid metabolism. Prevents the establishment of cellular antiviral state by blocking the interferon-alpha/beta (IFN-alpha/beta) and IFN-gamma signaling pathways and by blocking the formation of phosphorylated STAT1 and promoting ubiquitin-mediated proteasome-dependent degradation of STAT1. Activates STAT3 leading to cellular transformation. Regulates the activity of cellular genes, including c-myc and c-fos. May repress the promoter of p53, and sequester CREB3 and SP110 isoform 3/Sp110b in the cytoplasm. Represses cell cycle negative regulating factor CDKN1A, thereby interrupting an important check point of normal cell cycle regulation. Targets transcription factors involved in the regulation of inflammatory responses and in the immune response: suppresses TNF-induced NF-kappa-B activation, and activates AP-1. Binds to dendritic cells (DCs) via C1QR1, resulting in down-regulation of T-lymphocytes proliferation. Alters lipid metabolism by interacting with hepatocellular proteins involved in lipid accumulation and storage. Induces up-regulation of FAS promoter activity, and thereby contributes to the increased triglyceride accumulation in hepatocytes (steatosis). Functionally, forms a heterodimer with envelope glycoprotein E2, which mediates virus attachment to the host cell, virion internalization through clathrin-dependent endocytosis and fusion with host membrane. Fusion with the host cell is most likely mediated by both E1 and E2, through conformational rearrangements of the heterodimer required for fusion rather than a classical class II fusion mechanism. E1/E2 heterodimer binds host apolipoproteins such as APOB and ApoE thereby forming a lipo-viro-particle (LVP). APOE associated to the LVP allows the initial virus attachment to cell surface receptors such as the heparan sulfate proteoglycans (HSPGs), syndecan-1 (SDC1), syndecan-1 (SDC2), the low-density lipoprotein receptor (LDLR) and scavenger receptor class B type I (SCARB1). The cholesterol transfer activity of SCARB1 allows E2 exposure and binding of E2 to SCARB1 and the tetraspanin CD81. E1/E2 heterodimer binding on CD81 activates the epithelial growth factor receptor (EGFR) signaling pathway. Diffusion of the complex E1-E2-EGFR-SCARB1-CD81 to the cell lateral membrane allows further interaction with Claudin 1 (CLDN1) and occludin (OCLN) to finally trigger HCV entry. In terms of biological role, forms a heterodimer with envelope glycoprotein E1, which mediates virus attachment to the host cell, virion internalization through clathrin-dependent endocytosis and fusion with host membrane. Fusion with the host cell is most likely mediated by both E1 and E2, through conformational rearrangements of the heterodimer required for fusion rather than a classical class II fusion mechanism. The interaction between envelope glycoprotein E2 and host apolipoprotein E/APOE allows the proper assembly, maturation and infectivity of the viral particles. This interaction is probably promoted via the up-regulation of cellular autophagy by the virus. E1/E2 heterodimer binds host apolipoproteins such as APOB and APOE thereby forming a lipo-viro-particle (LVP). APOE associated to the LVP allows the initial virus attachment to cell surface receptors such as the heparan sulfate proteoglycans (HSPGs), syndecan-1 (SDC1), syndecan-1 (SDC2), the low-density lipoprotein receptor (LDLR) and scavenger receptor class B type I (SCARB1). The cholesterol transfer activity of SCARB1 allows E2 exposure and binding of E2 to SCARB1 and the tetraspanin CD81. E1/E2 heterodimer binding on CD81 activates the epithelial growth factor receptor (EGFR) signaling pathway. Diffusion of the complex E1-E2-EGFR-SCARB1-CD81 to the cell lateral membrane allows further interaction with Claudin 1 (CLDN1) and occludin (OCLN) to finally trigger HCV entry. Inhibits host EIF2AK2/PKR activation, preventing the establishment of an antiviral state. Viral ligand for CD209/DC-SIGN and CLEC4M/DC-SIGNR, which are respectively found on dendritic cells (DCs), and on liver sinusoidal endothelial cells and macrophage-like cells of lymph node sinuses. These interactions allow the capture of circulating HCV particles by these cells and subsequent facilitated transmission to permissive cells such as hepatocytes and lymphocyte subpopulations. The interaction between E2 and host amino acid transporter complex formed by SLC3A2 and SLC7A5/LAT1 may facilitate viral entry into host cell. Its function is as follows. Ion channel protein that acts as a viroporin and plays an essential role in the assembly, envelopment and secretion of viral particles. Regulates the host cell secretory pathway, which induces the intracellular retention of viral glycoproteins and favors assembly of viral particles. Creates a pore in acidic organelles and releases Ca(2+) and H(+) in the cytoplasm of infected cells, leading to a productive viral infection. High levels of cytoplasmic Ca(2+) may trigger membrane trafficking and transport of viral ER-associated proteins to viroplasms, sites of viral genome replication. This ionic imbalance induces the assembly of the inflammasome complex, which triggers the maturation of pro-IL-1beta into IL-1beta through the action of caspase-1. Targets also host mitochondria and induces mitochondrial depolarization. In addition of its role as a viroporin, acts as a lipid raft adhesion factor. Cysteine protease required for the proteolytic auto-cleavage between the non-structural proteins NS2 and NS3. The N-terminus of NS3 is required for the function of NS2 protease (active region NS2-3). Promotes the initiation of viral particle assembly by mediating the interaction between structural and non-structural proteins. Functionally, displays three enzymatic activities: serine protease with a chymotrypsin-like fold, NTPase and RNA helicase. NS3 serine protease, in association with NS4A, is responsible for the cleavages of NS3-NS4A, NS4A-NS4B, NS4B-NS5A and NS5A-NS5B. The NS3/NS4A complex prevents phosphorylation of host IRF3, thus preventing the establishment of dsRNA induced antiviral state. The NS3/NS4A complex induces host amino acid transporter component SLC3A2, thus contributing to HCV propagation. NS3 RNA helicase binds to RNA and unwinds both dsDNA and dsRNA in the 3' to 5' direction, and likely resolves RNA complicated stable secondary structures in the template strand. Binds a single ATP and catalyzes the unzipping of a single base pair of dsRNA. Inhibits host antiviral proteins TBK1 and IRF3 thereby preventing the establishment of an antiviral state. Cleaves host MAVS/CARDIF thereby preventing the establishment of an antiviral state. Cleaves host TICAM1/TRIF, thereby disrupting TLR3 signaling and preventing the establishment of an antiviral state. In terms of biological role, peptide cofactor which forms a non-covalent complex with the N-terminal of NS3 serine protease. The NS3/NS4A complex prevents phosphorylation of host IRF3, thus preventing the establishment of dsRNA induced antiviral state. The NS3/NS4A complex induces host amino acid transporter component SLC3A2, thus contributing to HCV propagation. Its function is as follows. Induces a specific membrane alteration that serves as a scaffold for the virus replication complex. This membrane alteration gives rise to the so-called ER-derived membranous web that contains the replication complex. NS4B self-interaction contributes to its function in membranous web formation. Promotes host TRIF protein degradation in a CASP8-dependent manner thereby inhibiting host TLR3-mediated interferon signaling. Disrupts the interaction between STING and TBK1 contributing to the inhibition of interferon signaling. Phosphorylated protein that is indispensable for viral replication and assembly. Both hypo- and hyperphosphorylated states are required for the viral life cycle. The hyperphosphorylated form of NS5A is an inhibitor of viral replication. Involved in RNA-binding and especially in binding to the viral genome. Zinc is essential for RNA-binding. Participates in the viral particle production as a result of its interaction with the mature viral core protein. Its interaction with host VAPB may target the viral replication complex to vesicles. Down-regulates viral IRES translation initiation. Mediates interferon resistance, presumably by interacting with and inhibiting host EIF2AK2/PKR. Prevents BIN1-induced apoptosis. Acts as a transcriptional activator of some host genes important for viral replication when localized in the nucleus. Via the interaction with host PACSIN2, modulates lipid droplet formation in order to promote virion assembly. Modulates TNFRSF21/DR6 signaling pathway for viral propagation. Functionally, RNA-dependent RNA polymerase that performs primer-template recognition and RNA synthesis during viral replication. Initiates RNA transcription/replication at a flavin adenine dinucleotide (FAD), resulting in a 5'- FAD cap on viral RNAs. In this way, recognition of viral 5' RNA by host pattern recognition receptors can be bypassed, thereby evading activation of antiviral pathways. In Hepatitis C virus genotype 2k (isolate VAT96) (HCV), this protein is Genome polyprotein.